The chain runs to 1717 residues: MEPAAAATVQRLPELGREDRASAPAAAAAAAAAAAAAAAALAAAAGGGRSPEPALTPAAPSGGNGSGSGAREEAPGEAPPGPLPGRAGGAGRRRRRGAPQPIAGGAAPVPGAGGGANSLLLRRGRLKRNLSAAAAAASSSSSSSAAAASHSPGAAGLPASCSASASLCTRSLDRKTLLLKHRQTLQLQPSDRDWVRHQLQRGCVHVFDRHMASTYLRPVLCTLDTTAGEVAARLLQLGHKGGGVVKVLGQGPGAAAAREPAEPPPEAGPRLAPPEPRDSEVPPARSAPGAFGGPPRAPPADLPLPVGGPGGWSRRASPAPSDSSPGEPFVGGPVSSPRAPRPVVSDTESFSLSPSAESVSDRLDPYSSGGGSSSSSEELEADAASAPTGVPGQPRRPGHPAQPLPLPQTASSPQPQQKAPRAIDSPGGAVREGSCEEKAAAAVAPGGLQSTPGRSGVTAEKAPPPPPPPTLYVQLHGETTRRLEAEEKPLQIQNDYLFQLGFGELWRVQEEGMDSEIGCLIRFYAGKPHSTGSSERIQLSGMYNVRKGKMQLPVNRWTRRQVILCGTCLIVSSVKDSLTGKMHVLPLIGGKVEEVKKHQHCLAFSSSGPQSQTYYICFDTFTEYLRWLRQVSKVASQRISSVDLSCCSLEHLPANLFYSQDLTHLNLKQNFLRQNPSLPAARGLNELQRFTKLKSLNLSNNHLGDFPLAVCSIPTLAELNVSCNALRSVPAAVGVMHNLQTFLLDGNFLQSLPAELENMKQLSYLGLSFNEFTDIPEVLEKLTAVDKLCMSGNCVETLRLQALRKMPHIKHVDLRLNVIRKLIADEVDFLQHVTQLDLRDNKLGDLDAMIFNNIEVLHCERNQLVTLDICGYFLKALYASSNELVQLDVYPVPNYLSYMDVSRNRLENVPEWVCESRKLEVLDIGHNQICELPARLFCNSSLRKLLAGHNQLARLPERLERTSVEVLDVQHNQLLELPPNLLMKADSLRFLNASANKLESLPPATLSEETNSILQELYLTNNSLTDKCVPLLTGHPHLKILHMAYNRLQSFPASKMAKLEELEEIDLSGNKLKAIPTTIMNCRRMHTVIAHSNCIEVFPEVMQLPEIKCVDLSCNELSEVTLPENLPPKLQELDLTGNPRLVLDHKTLELLNNIRCFKIDQPSTGDASGAPAVWSHGYTEASGVKNKLCVAALSVNNFCDNREALYGVFDGDRNVEVPYLLQCTMSDILAEELQKTKNEEEYMVNTFIVMQRKLGTAGQKLGGAAVLCHIKHDPVDPGGSFTLTSANVGKCQTVLCRNGKPLPLSRSYIMSCEEELKRIKQHKAIITEDGKVNGVTESTRILGYTFLHPSVVPRPHVQSVLLTPQDEFFILGSKGLWDSLSVEEAVEAVRNVPDALAAAKKLCTLAQSYGCHDSISAVVVQLSVTEDSFCCCELSAGGAVPPPSPGIFPPSVNMVIKDRPSDGLGVPSSSSGMASEISSELSTSEMSSEVGSTASDEPPPGALSENSPAYPSEQRCMLHPICLSNSFQRQLSSATFSSAFSDNGLDSDDEEPIEGVFTNGSRVEVEVDIHCSRAKEKEKQQHLLQVPAEASDEGIVISANEDEPGLPRKADFSAVGTIGRRRANGSVAPQERSHNVIEVATDAPLRKPGGYFAAPAQPDPDDQFIIPPELEEEVKEIMKHHQEQQQQQQPPPPPQLQPQLPRHYQLDQLPDYYDTPL.

Residue M1 is modified to N-acetylmethionine. Disordered regions lie at residues 1–25, 41–118, 136–156, and 252–470; these read MEPA…SAPA, LAAA…GANS, AASS…GAAG, and PGAA…PPPT. Over residues 98–110 the composition is skewed to low complexity; the sequence is APQPIAGGAAPVP. A compositionally biased stretch (pro residues) spans 262–274; sequence EPPPEAGPRLAPP. Composition is skewed to low complexity over residues 313–325 and 333–345; these read SRRA…DSSP and PVSS…PVVS. Position 317 is a phosphoserine (S317). Composition is skewed to polar residues over residues 346–358 and 408–417; these read DTES…SAES and QTASSPQPQQ. A Phosphoserine modification is found at S412. Residues 536-636 enclose the PH domain; the sequence is RIQLSGMYNV…WLRQVSKVAS (101 aa). LRR repeat units lie at residues 638-659, 661-682, 692-712, 715-736, 738-760, 761-783, 784-804, 808-831, 832-853, 873-894, 895-916, 918-939, 941-962, 963-984, 987-1008, 1013-1033, 1037-1058, 1061-1082, 1084-1105, 1106-1127, and 1129-1150; these read RISS…LFYS, DLTH…PAAR, KLKS…AVCS, TLAE…VGVM, NLQT…ENMK, QLSY…EKLT, AVDK…QALR, HIKH…DFLQ, HVTQ…IFNN, FLKA…PVPN, YLSY…VCES, KLEV…LFCN, SLRK…LERT, SVEV…LLMK, SLRF…TLSE, ILQE…PLLT, HLKI…KMAK, ELEE…IMNC, RMHT…MQLP, EIKC…ENLP, and KLQE…TLEL. The tract at residues 1076–1205 is interaction with NHERF1; it reads PTTIMNCRRM…NNFCDNREAL (130 aa). Positions 1175–1422 constitute a PPM-type phosphatase domain; the sequence is SHGYTEASGV…DSISAVVVQL (248 aa). Positions 1210, 1211, 1374, and 1413 each coordinate Mn(2+). 2 disordered regions span residues 1458 to 1510 and 1673 to 1717; these read DRPS…SPAY and EVKE…DTPL. Over residues 1468–1489 the composition is skewed to low complexity; sequence SSSSGMASEISSELSTSEMSSE. The PDZ-binding; required for interaction with NHERF1 motif lies at 1715-1717; it reads TPL.

Interacts with the nucleotide free form of K-Ras (KRAS) via its LRR repeats. Interacts with AKT2, AKT3, PRKCB isoform beta-II, STK4, RPS6KB1, RAF1. Isoform 1 (predominantly) and isoform 2 interact with BRAP. Interacts with FKBP5; FKBP5 acts as a scaffold for PHLPP1 and Akt. Interacts with SCRIB; SCRIB acts as a scaffold for PHLPP1 and Akt. Interacts with NHERF1; NHERF1 scaffolds a heterotrimeric complex with PTEN at the plasma membrane. Interacts with WDR48 and USP12. Mn(2+) serves as cofactor. In colorectal cancer tissue, expression is highest in the surface epithelium of normal colonic mucosa adjacent to the cancer tissue but is largely excluded from the crypt bases. Expression is lost or significantly decreased in 78% of tested tumors (at protein level). Ubiquitously expressed in non-cancerous tissues.

Its subcellular location is the cytoplasm. It is found in the membrane. The protein resides in the nucleus. It localises to the cell membrane. The enzyme catalyses O-phospho-L-seryl-[protein] + H2O = L-seryl-[protein] + phosphate. The catalysed reaction is O-phospho-L-threonyl-[protein] + H2O = L-threonyl-[protein] + phosphate. Its activity is regulated as follows. Insensitive to okadaic acid. Deubiquitination by WDR48-USP12 complex positively regulates PHLPP1 stability. In terms of biological role, protein phosphatase involved in regulation of Akt and PKC signaling. Mediates dephosphorylation in the C-terminal domain hydrophobic motif of members of the AGC Ser/Thr protein kinase family; specifically acts on 'Ser-473' of AKT2 and AKT3, 'Ser-660' of PRKCB and 'Ser-657' of PRKCA. Isoform 2 seems to have a major role in regulating Akt signaling in hippocampal neurons. Akt regulates the balance between cell survival and apoptosis through a cascade that primarily alters the function of transcription factors that regulate pro- and antiapoptotic genes. Dephosphorylation of 'Ser-473' of Akt triggers apoptosis and suppression of tumor growth. Dephosphorylation of PRKCA and PRKCB leads to their destabilization and degradation. Dephosphorylates STK4 on 'Thr-387' leading to STK4 activation and apoptosis. Dephosphorylates RPS6KB1 and is involved in regulation of cap-dependent translation. Inhibits cancer cell proliferation and may act as a tumor suppressor. Dephosphorylates RAF1 inhibiting its kinase activity. May act as a negative regulator of K-Ras signaling in membrane rafts. Involved in the hippocampus-dependent long-term memory formation. Involved in circadian control by regulating the consolidation of circadian periodicity after resetting. Involved in development and function of regulatory T-cells. The protein is PH domain leucine-rich repeat-containing protein phosphatase 1 (PHLPP1) of Homo sapiens (Human).